A 263-amino-acid polypeptide reads, in one-letter code: Hydroxyacylglutathione hydrolase (263 aa).

Zn(2+)-binding residues include His60, His62, Asp64, His65, His120, Asp137, and His175.

It belongs to the metallo-beta-lactamase superfamily. Glyoxalase II family. As to quaternary structure, monomer. It depends on Zn(2+) as a cofactor.

It catalyses the reaction an S-(2-hydroxyacyl)glutathione + H2O = a 2-hydroxy carboxylate + glutathione + H(+). It participates in secondary metabolite metabolism; methylglyoxal degradation; (R)-lactate from methylglyoxal: step 2/2. In terms of biological role, thiolesterase that catalyzes the hydrolysis of S-D-lactoyl-glutathione to form glutathione and D-lactic acid. This Shewanella pealeana (strain ATCC 700345 / ANG-SQ1) protein is Hydroxyacylglutathione hydrolase.